Reading from the N-terminus, the 224-residue chain is Cytidylate kinase (224 aa).

Gly14–Thr22 provides a ligand contact to ATP.

Belongs to the cytidylate kinase family. Type 1 subfamily.

Its subcellular location is the cytoplasm. It catalyses the reaction CMP + ATP = CDP + ADP. The enzyme catalyses dCMP + ATP = dCDP + ADP. This is Cytidylate kinase from Mycoplasmoides gallisepticum (strain R(low / passage 15 / clone 2)) (Mycoplasma gallisepticum).